The following is an 811-amino-acid chain: MVIFKERKPTENLFTRKIPAKYFIFSPSFLSVHYFEFYLPMSGDNNIEPTSRGSNDNSNGPSNGSSVNSNRYSLNAPKYSSQPPPASHTYLPPMSVNIPPIASKSSSIYSLLHQSSPRPETPNPILPPLIGSGPGSHKPSPTPTQPPAQPATQRQPATYSVYPASISLNRSNSSAYPLSFKSEETLNNNPPTAAKRTNTFPSIPSSTKKQKTSQEKRISSISRRNTQEIIAKQIAENNKSKTIEEYAQIVKHAEIKVLSMDSQNTSKAALQLAEQNRERERQVFALLWLMKNCKSQHDSYVPRGKIFAQYASSCSQNNLKPLSQASLGKLIRTVFPDLTTRRLGMRGQSKYHYCGLKLTVNESGSVSLNNNNASLSLVHNNDPISPLSSPSPSSPSPQVPNVSSPFSLNRKSLSRTGSPVKQSSNDNPNEPELESQHPNETEANKLDSLPPAANNPTGTLSSDELTFTHDLIEKVFNCNDKLSDNYNTQILSNTEHPLLTSYKLDFPKIPAGVLPTDTDSDVISSLESLYHIHCNSVYECIKFLKSDNISNALFFSNSNSISPTMFNLFISEPLIDWVTKCDLITYTGLIKFFSQFIIHSNEISDSIIQKLESMIKLLPEQINKAVLELPKALVQRKLSIINNFTKLVKKLIKLLKFILNFLKSFPIFKSGMNNDWKNIVNLDDILEMMINEDDTNSETNTIMQHLQGFCQVFVTKFLNSSMSVSNDPSVSIECKSLNEMIKDFCSFISLQSKFSCLKLIDCSTRFRNAIIGDISLKSNENLLSWLFLNNVMGQLLNYCFEVMKFVNGLKV.

2 disordered regions span residues 48–92 (EPTS…TYLP) and 111–156 (LLHQ…QRQP). Over residues 51–70 (SRGSNDNSNGPSNGSSVNSN) the composition is skewed to low complexity. Over residues 140–149 (SPTPTQPPAQ) the composition is skewed to pro residues. Phosphoserine is present on Ser-173. The segment at 181 to 222 (KSEETLNNNPPTAAKRTNTFPSIPSSTKKQKTSQEKRISSIS) is disordered. The segment covering 185 to 204 (TLNNNPPTAAKRTNTFPSIP) has biased composition (polar residues). A DNA-binding region (RFX-type winged-helix) is located at residues 285-360 (ALLWLMKNCK…YHYCGLKLTV (76 aa)). A compositionally biased stretch (low complexity) spans 377-391 (LVHNNDPISPLSSPS). Residues 377–461 (LVHNNDPISP…AANNPTGTLS (85 aa)) are disordered. The span at 409–428 (NRKSLSRTGSPVKQSSNDNP) shows a compositional bias: polar residues. The segment covering 434–445 (ESQHPNETEANK) has biased composition (basic and acidic residues).

The protein belongs to the RFX family.

The polypeptide is RFX-like DNA-binding protein RFX1 (RFX1) (Saccharomyces cerevisiae (strain ATCC 204508 / S288c) (Baker's yeast)).